Consider the following 238-residue polypeptide: Ribosomal RNA small subunit methyltransferase G (238 aa).

Residues G106, L111, 157 to 158, and R170 contribute to the S-adenosyl-L-methionine site; that span reads IE.

This sequence belongs to the methyltransferase superfamily. RNA methyltransferase RsmG family.

The protein localises to the cytoplasm. The catalysed reaction is guanosine(527) in 16S rRNA + S-adenosyl-L-methionine = N(7)-methylguanosine(527) in 16S rRNA + S-adenosyl-L-homocysteine. In terms of biological role, specifically methylates the N7 position of guanine in position 527 of 16S rRNA. The chain is Ribosomal RNA small subunit methyltransferase G from Psychrobacter cryohalolentis (strain ATCC BAA-1226 / DSM 17306 / VKM B-2378 / K5).